We begin with the raw amino-acid sequence, 188 residues long: Ribosome-recycling factor (188 aa).

The protein belongs to the RRF family.

It localises to the cytoplasm. Its function is as follows. Responsible for the release of ribosomes from messenger RNA at the termination of protein biosynthesis. May increase the efficiency of translation by recycling ribosomes from one round of translation to another. The polypeptide is Ribosome-recycling factor (Anaeromyxobacter sp. (strain K)).